Consider the following 288-residue polypeptide: Elongation factor Ts (288 aa).

The segment at Thr-82–Val-85 is involved in Mg(2+) ion dislocation from EF-Tu.

It belongs to the EF-Ts family.

It is found in the cytoplasm. Its function is as follows. Associates with the EF-Tu.GDP complex and induces the exchange of GDP to GTP. It remains bound to the aminoacyl-tRNA.EF-Tu.GTP complex up to the GTP hydrolysis stage on the ribosome. The chain is Elongation factor Ts from Chlorobaculum parvum (strain DSM 263 / NCIMB 8327) (Chlorobium vibrioforme subsp. thiosulfatophilum).